A 542-amino-acid polypeptide reads, in one-letter code: MGRADPEEGQLPAPVKPPDGGWGWIVLFGCFVITGFSYAFPKAVSVYFKELMKDFHVGYSDTAWISSIMLAMLYGTGPVCSIMVNQFGCRPVMLIGGLLASSGMILASFTTNIIELYLTAGVLTGLGMALNFQPSLIMLGTYFDKRRPLANGLAAAGSPVFLSSLSPLGQVLLEKFGWRGGFLIMGGLLLNCCTCGAVMRPLDAGMKRKTEKAQDKYEAKEMLPMGGKSEEGISTTDGTKKTKKAKKKPKKGKKLLDFSIFSNRGFIIYTISKFILVLGLFVPPILLVNYAKDTGVPDTEAAFLLSIIGFIDIFARPACGMVAGLKWVRPHVAYLFSFAMLFNGLTDICSARASNYTGLVIFCVFFGISYGMVGALQFEVLMAIVGSQKFSSAIGLVLLIEAFAVLIGPPSAGRLVDALKNYEVIFYLAGSEVVLSALFLAMATYCCLNRGKKTPPPEKNPSAGGGSDTEEAESDVQEAEEHSSDNHQPAHGTDKATVAANEEANHVEDEQSGEGGRCPEADGEVSSRAGCNADQTVERDSF.

At 1–19 the chain is on the cytoplasmic side; that stretch reads MGRADPEEGQLPAPVKPPD. The helical transmembrane segment at 20 to 40 threads the bilayer; it reads GGWGWIVLFGCFVITGFSYAF. Over 41–63 the chain is Extracellular; sequence PKAVSVYFKELMKDFHVGYSDTA. A helical transmembrane segment spans residues 64-84; sequence WISSIMLAMLYGTGPVCSIMV. Residues 85-93 lie on the Cytoplasmic side of the membrane; sequence NQFGCRPVM. Residues 94 to 114 form a helical membrane-spanning segment; sequence LIGGLLASSGMILASFTTNII. Topologically, residues 115–119 are extracellular; the sequence is ELYLT. The helical transmembrane segment at 120-140 threads the bilayer; it reads AGVLTGLGMALNFQPSLIMLG. Residues 141–152 lie on the Cytoplasmic side of the membrane; the sequence is TYFDKRRPLANG. The chain crosses the membrane as a helical span at residues 153–173; the sequence is LAAAGSPVFLSSLSPLGQVLL. Residues 174–181 are Extracellular-facing; sequence EKFGWRGG. A helical transmembrane segment spans residues 182–202; sequence FLIMGGLLLNCCTCGAVMRPL. Topologically, residues 203 to 265 are cytoplasmic; that stretch reads DAGMKRKTEK…LDFSIFSNRG (63 aa). The tract at residues 226 to 247 is disordered; that stretch reads GGKSEEGISTTDGTKKTKKAKK. Residues 266 to 286 traverse the membrane as a helical segment; sequence FIIYTISKFILVLGLFVPPIL. Topologically, residues 287–301 are extracellular; the sequence is LVNYAKDTGVPDTEA. Residues 302 to 322 traverse the membrane as a helical segment; the sequence is AFLLSIIGFIDIFARPACGMV. Residues 323-330 lie on the Cytoplasmic side of the membrane; it reads AGLKWVRP. The chain crosses the membrane as a helical span at residues 331 to 351; it reads HVAYLFSFAMLFNGLTDICSA. The Extracellular portion of the chain corresponds to 352 to 357; the sequence is RASNYT. A helical transmembrane segment spans residues 358–378; it reads GLVIFCVFFGISYGMVGALQF. Over 379 to 392 the chain is Cytoplasmic; the sequence is EVLMAIVGSQKFSS. The chain crosses the membrane as a helical span at residues 393 to 413; the sequence is AIGLVLLIEAFAVLIGPPSAG. Over 414-423 the chain is Extracellular; sequence RLVDALKNYE. A helical transmembrane segment spans residues 424–444; the sequence is VIFYLAGSEVVLSALFLAMAT. The Cytoplasmic segment spans residues 445–542; sequence YCCLNRGKKT…ADQTVERDSF (98 aa). The interval 453-542 is disordered; that stretch reads KTPPPEKNPS…ADQTVERDSF (90 aa). Basolateral sorting signal regions lie at residues 465-510 and 511-532; these read GGSD…VEDE and QSGE…AGCN. Positions 468–478 are enriched in acidic residues; that stretch reads DTEEAESDVQE.

This sequence belongs to the major facilitator superfamily. Monocarboxylate porter (TC 2.A.1.13) family. As to expression, retinal pigment epithelium.

It localises to the basolateral cell membrane. The catalysed reaction is (S)-lactate(in) + H(+)(in) = (S)-lactate(out) + H(+)(out). Its function is as follows. Probable retinal pigment epithelium (RPE)-specific proton-coupled L-lactate transporter. May facilitate transport of lactate and H(+) out of the retina and could therefore play a role in pH and ion homeostasis of the outer retina. The protein is Monocarboxylate transporter 3 (SLC16A8) of Gallus gallus (Chicken).